The sequence spans 323 residues: Protein translocase subunit SecF (323 aa).

Residues 1 to 22 (MAQEYTVEQLNHGRKVYDFMRW) lie on the Cytoplasmic side of the membrane. A helical membrane pass occupies residues 23–43 (DYWAFGISGLLLIAAIVIMGV). Topologically, residues 44–142 (RGFNWGLDFT…FVGPSVGADL (99 aa)) are periplasmic. The chain crosses the membrane as a helical span at residues 143-163 (AQTGAMALMAALLSILVYVGF). Over 164–170 (RFEWRLA) the chain is Cytoplasmic. Residues 171 to 191 (AGVVIALAHDVIITLGILSLF) form a helical membrane-spanning segment. At 192 to 196 (HIEID) the chain is on the periplasmic side. The chain crosses the membrane as a helical span at residues 197–217 (LTIVASLMSVIGYSLNDSIVV). Residues 218-247 (SDRIRENFRKIRRGTPYEIFNVSLTQTLHR) are Cytoplasmic-facing. A helical membrane pass occupies residues 248-270 (TLITSGTTLMVILMLYLFGGPVL). At 271–280 (EGFSLTMLIG) the chain is on the periplasmic side. The chain crosses the membrane as a helical span at residues 281 to 301 (VSIGTASSIYVASALALKLGM). Over 302–323 (KREHMLQQKVEKEGADQPSILP) the chain is Cytoplasmic.

Belongs to the SecD/SecF family. SecF subfamily. As to quaternary structure, forms a complex with SecD. Part of the essential Sec protein translocation apparatus which comprises SecA, SecYEG and auxiliary proteins SecDF-YajC and YidC.

The protein localises to the cell inner membrane. Functionally, part of the Sec protein translocase complex. Interacts with the SecYEG preprotein conducting channel. SecDF uses the proton motive force (PMF) to complete protein translocation after the ATP-dependent function of SecA. The protein is Protein translocase subunit SecF of Escherichia coli O157:H7.